We begin with the raw amino-acid sequence, 427 residues long: Histidinol dehydrogenase (427 aa).

Residues tyrosine 125, glutamine 186, and asparagine 209 each contribute to the NAD(+) site. Serine 234, glutamine 256, and histidine 259 together coordinate substrate. Zn(2+) is bound by residues glutamine 256 and histidine 259. Residues glutamate 325 and histidine 326 each act as proton acceptor in the active site. Histidine 326, aspartate 359, glutamate 413, and histidine 419 together coordinate substrate. Aspartate 359 contributes to the Zn(2+) binding site. Histidine 419 is a binding site for Zn(2+).

Belongs to the histidinol dehydrogenase family. Zn(2+) serves as cofactor.

The enzyme catalyses L-histidinol + 2 NAD(+) + H2O = L-histidine + 2 NADH + 3 H(+). The protein operates within amino-acid biosynthesis; L-histidine biosynthesis; L-histidine from 5-phospho-alpha-D-ribose 1-diphosphate: step 9/9. Functionally, catalyzes the sequential NAD-dependent oxidations of L-histidinol to L-histidinaldehyde and then to L-histidine. The polypeptide is Histidinol dehydrogenase (Leptospira interrogans serogroup Icterohaemorrhagiae serovar Lai (strain 56601)).